The following is a 581-amino-acid chain: DNA primase (581 aa).

Residues 40–64 form a CHC2-type zinc finger; that stretch reads CPFHNEKTPSFTVNGEKQFYHCFGC. The Toprim domain occupies 259–341; that stretch reads QRLLVVEGYM…GRQVRFMFLP (83 aa). Positions 265, 309, and 311 each coordinate Mg(2+).

This sequence belongs to the DnaG primase family. In terms of assembly, monomer. Interacts with DnaB. Zn(2+) is required as a cofactor. Mg(2+) serves as cofactor.

The catalysed reaction is ssDNA + n NTP = ssDNA/pppN(pN)n-1 hybrid + (n-1) diphosphate.. In terms of biological role, RNA polymerase that catalyzes the synthesis of short RNA molecules used as primers for DNA polymerase during DNA replication. The protein is DNA primase of Salmonella typhimurium (strain LT2 / SGSC1412 / ATCC 700720).